Consider the following 155-residue polypeptide: SsrA-binding protein (155 aa).

The protein belongs to the SmpB family.

It localises to the cytoplasm. Functionally, required for rescue of stalled ribosomes mediated by trans-translation. Binds to transfer-messenger RNA (tmRNA), required for stable association of tmRNA with ribosomes. tmRNA and SmpB together mimic tRNA shape, replacing the anticodon stem-loop with SmpB. tmRNA is encoded by the ssrA gene; the 2 termini fold to resemble tRNA(Ala) and it encodes a 'tag peptide', a short internal open reading frame. During trans-translation Ala-aminoacylated tmRNA acts like a tRNA, entering the A-site of stalled ribosomes, displacing the stalled mRNA. The ribosome then switches to translate the ORF on the tmRNA; the nascent peptide is terminated with the 'tag peptide' encoded by the tmRNA and targeted for degradation. The ribosome is freed to recommence translation, which seems to be the essential function of trans-translation. In Streptococcus pyogenes serotype M18 (strain MGAS8232), this protein is SsrA-binding protein.